Reading from the N-terminus, the 305-residue chain is Pseudomurein endoisopeptidase (305 aa).

4 pseudomurein-binding repeat regions span residues 3–34 (SNSVNIETFKDMLKRYEDFKMKNKREPRVIFI), 39–70 (GESIPLETFRDMVRRYNNFKDRYGREPRIVYV), 87–116 (YVSITQFKDMLSRYNRFKEVNGREPRVVFI), and 121–152 (GPSVSLETFKDMCKRYNQFLEENRREPRIVYV). Active-site residues include C213, H248, and D272.

Belongs to the Psimunavirus Pseudomurein endoisopeptidase family. As to quaternary structure, monomer. Ca(2+) serves as cofactor.

Its function is as follows. Cysteine protease that cleaves the cell wall of its host methanogen under hydrogen limitation of the latter (autolysis). Cleaves the epsilon-Ala-Lys isopeptide bond in the oligopeptides of pseudomurein. The protein is Pseudomurein endoisopeptidase (peiP) of Methanobacterium phage psiM2 (PsiM2).